A 314-amino-acid polypeptide reads, in one-letter code: Annexin-like protein RJ4 (314 aa).

Annexin repeat units lie at residues 10 to 81, 82 to 153, 165 to 236, and 240 to 311; these read FCAK…RWTL, DPAD…ALVT, KLAN…TAIR, and DPKK…TLLG. 3 residues coordinate Ca(2+): Gly25, Gly27, and Glu67. Residues Ile253, Arg255, Gly257, Asp297, and Thr298 each coordinate Ca(2+).

This sequence belongs to the annexin (TC 1.A.31.1) family. As to expression, predominantly in developing fruit.

The sequence is that of Annexin-like protein RJ4 from Fragaria ananassa (Strawberry).